The primary structure comprises 495 residues: Autoinducer 2 import ATP-binding protein LsrA (495 aa).

ABC transporter domains are found at residues 5–233 and 256–494; these read IEAH…TPVS and AQDF…FGGQ. Residue 37–44 participates in ATP binding; it reads GGNGAGKS.

The protein belongs to the ABC transporter superfamily. AI-2 autoinducer porter (TC 3.A.1.2.8) family. In terms of assembly, the complex is composed of two ATP-binding proteins (LsrA), two transmembrane proteins (LsrC and LsrD) and a solute-binding protein (LsrB).

The protein localises to the cell inner membrane. It carries out the reaction ATP + H2O + (2R,4S)-2-methyl-2,3,3,4-tetrahydroxytetrahydrofuran-[AI-2-binding protein]Side 1 = ADP + phosphate + (2R,4S)-2-methyl-2,3,3,4-tetrahydroxytetrahydrofuranSide 2 + [AI-2-binding protein]Side 1.. In terms of biological role, part of the ABC transporter complex LsrABCD involved in autoinducer 2 (AI-2) import. Responsible for energy coupling to the transport system. This is Autoinducer 2 import ATP-binding protein LsrA (lsrA) from Enterobacter sp. (strain 638).